We begin with the raw amino-acid sequence, 391 residues long: MADIDNKEQSELDQDLEDVEEVEEEETGEETKIKARQLTVQMMQNPQILAALQERLDGLVDTPTGYIESLPKVVKRRVNALKNLQVKCAQIEAKFYEEVHDLERKYAVLYQPLFDKRFEIINAIYEPTEEECEWKPDEEDEVSEELKEKAKIEDEKKDEEKEDPKGIPEFWLTVFKNVDLLSDMVQEHDEPILKHLKDIKVKFSDAGQPMSFVLEFHFEPNDYFTNEVLTKTYRMRSEPDDSDPFSFDGPEIMGCTGCQIDWKKGKNVTLKTIKKKQKHKGRGTVRTVTKTVSNDSFFNFFAPPEVPENGDLDDDAEAILAADFEIGHFLRERIIPRSVLYFTGEAIEDDDDDYDEEGEEADEEGEEEGDEENDPDYDPKKDQNPAECKQQ.

Residues 1–10 are compositionally biased toward basic and acidic residues; it reads MADIDNKEQS. A disordered region spans residues 1–32; it reads MADIDNKEQSELDQDLEDVEEVEEEETGEETK. Ala2 carries the N-acetylalanine modification. The residue at position 10 (Ser10) is a Phosphoserine. Positions 11–28 are enriched in acidic residues; it reads ELDQDLEDVEEVEEEETG. Phosphothreonine occurs at positions 62 and 64. Position 69 is a phosphoserine (Ser69). An N6-acetyllysine modification is found at Lys116. The short motif at 125–150 is the NAP1L motif element; sequence YEPTEEECEWKPDEEDEVSEELKEKA. Positions 131-143 are enriched in acidic residues; it reads ECEWKPDEEDEVS. Residues 131-163 form a disordered region; the sequence is ECEWKPDEEDEVSEELKEKAKIEDEKKDEEKED. A Phosphoserine modification is found at Ser143. Residues 144 to 163 are compositionally biased toward basic and acidic residues; the sequence is EELKEKAKIEDEKKDEEKED. Positions 273–279 match the Nuclear localization signal motif; the sequence is IKKKQKH. Positions 346–376 are enriched in acidic residues; the sequence is AIEDDDDDYDEEGEEADEEGEEEGDEENDPD. Positions 346–391 are disordered; it reads AIEDDDDDYDEEGEEADEEGEEEGDEENDPDYDPKKDQNPAECKQQ. Residues Glu359 and Glu360 each carry the 5-glutamyl polyglycine modification. A compositionally biased stretch (basic and acidic residues) spans 377-391; sequence YDPKKDQNPAECKQQ. Cys388 is modified (cysteine methyl ester). Cys388 is lipidated: S-farnesyl cysteine. The propeptide at 389–391 is removed in mature form; the sequence is KQQ.

Belongs to the nucleosome assembly protein (NAP) family. In terms of assembly, homodimer. The dimer binds strongly and sequentially to single and double H2A-H2B heterodimers. Interacts with ERCC6; this interaction increases ERCC6 processivity. Interacts with RAD54. Interacts with SETD1A. In terms of processing, polyglycylated by TTLL10 on glutamate residues, resulting in polyglycine chains on the gamma-carboxyl group. Both polyglutamylation and polyglycylation modifications can coexist on the same protein on adjacent residues, and lowering polyglycylation levels increases polyglutamylation, and reciprocally. Polyglutamylated by TTLL4 on glutamate residues, resulting in polyglutamate chains on the gamma-carboxyl group. Both polyglutamylation and polyglycylation modifications can coexist on the same protein on adjacent residues, and lowering polyglycylation levels increases polyglutamylation, and reciprocally. Highly expressed in the brain (at protein level). High expression in cerebral cortex, not in cerebellar cortex.

It is found in the nucleus. It localises to the cytoplasm. The protein resides in the melanosome. Histone chaperone that plays a role in the nuclear import of H2A-H2B and nucleosome assembly. Also participates in several important DNA repair mechanisms: greatly enhances ERCC6-mediated chromatin remodeling which is essential for transcription-coupled nucleotide excision DNA repair. Also stimulates homologous recombination (HR) by RAD51 and RAD54 which is essential in mitotic DNA double strand break (DSB) repair. Plays a key role in the regulation of embryonic neurogenesis. Promotes the proliferation of neural progenitors and inhibits neuronal differentiation during cortical development. Regulates neurogenesis via the modulation of RASSF10; regulates RASSF10 expression by promoting SETD1A-mediated H3K4 methylation at the RASSF10 promoter. The protein is Nucleosome assembly protein 1-like 1 (Nap1l1) of Mus musculus (Mouse).